A 692-amino-acid polypeptide reads, in one-letter code: DNA ligase (692 aa).

Residues 35 to 39 (DLVYD), 88 to 89 (SL), and E117 contribute to the NAD(+) site. K119 (N6-AMP-lysine intermediate) is an active-site residue. The NAD(+) site is built by R140, E176, K301, and K325. Residues C416, C419, C434, and C439 each coordinate Zn(2+). The 82-residue stretch at 611-692 (LTNQSNSWAS…FDLIKNSKKT (82 aa)) folds into the BRCT domain.

The protein belongs to the NAD-dependent DNA ligase family. LigA subfamily. It depends on Mg(2+) as a cofactor. The cofactor is Mn(2+).

It carries out the reaction NAD(+) + (deoxyribonucleotide)n-3'-hydroxyl + 5'-phospho-(deoxyribonucleotide)m = (deoxyribonucleotide)n+m + AMP + beta-nicotinamide D-nucleotide.. DNA ligase that catalyzes the formation of phosphodiester linkages between 5'-phosphoryl and 3'-hydroxyl groups in double-stranded DNA using NAD as a coenzyme and as the energy source for the reaction. It is essential for DNA replication and repair of damaged DNA. In Mesomycoplasma hyopneumoniae (strain J / ATCC 25934 / NCTC 10110) (Mycoplasma hyopneumoniae), this protein is DNA ligase.